The following is a 364-amino-acid chain: MSLQSIKYSRGSLEILDQLLLPGQSKYVVVRGVEDGWKVINKMQVRGAPAIAIVGCLSLAVEINPEDFENKKSLRQEIEGKLNYLVSARPTAVNMKIAADELITLANELYKDEATDVTQMKHRFLDATEAMLKKDIADNRAIGANGAQAILQRVAKAGKTPAGSTGSVRVLTHCNTGSLATAGYGTALGVVRQLAELGKLEHVYCTETRPYNQGARLTAYELVHEKFPATLVLDSMVAALLRAKNVAAVVVGADRVASNGDTANKIGTYQIAVVAKHHDVPFYVAAPLTSIDLAIPGGDHIIIEERPDREMTHVGEHRIAAPGINCWNPAFDVTPASLITGIITERGVFKPAELKEAITKLLES.

Catalysis depends on D254, which acts as the Proton donor.

It belongs to the eIF-2B alpha/beta/delta subunits family. MtnA subfamily.

It localises to the cytoplasm. The protein localises to the nucleus. The enzyme catalyses 5-(methylsulfanyl)-alpha-D-ribose 1-phosphate = 5-(methylsulfanyl)-D-ribulose 1-phosphate. It participates in amino-acid biosynthesis; L-methionine biosynthesis via salvage pathway; L-methionine from S-methyl-5-thio-alpha-D-ribose 1-phosphate: step 1/6. Its function is as follows. Catalyzes the interconversion of methylthioribose-1-phosphate (MTR-1-P) into methylthioribulose-1-phosphate (MTRu-1-P). This is Methylthioribose-1-phosphate isomerase from Drosophila simulans (Fruit fly).